We begin with the raw amino-acid sequence, 331 residues long: DNA-directed RNA polymerase subunit alpha (331 aa).

Residues methionine 1–leucine 242 form an alpha N-terminal domain (alpha-NTD) region. Residues valine 258 to asparagine 331 form an alpha C-terminal domain (alpha-CTD) region.

The protein belongs to the RNA polymerase alpha chain family. Homodimer. The RNAP catalytic core consists of 2 alpha, 1 beta, 1 beta' and 1 omega subunit. When a sigma factor is associated with the core the holoenzyme is formed, which can initiate transcription.

The enzyme catalyses RNA(n) + a ribonucleoside 5'-triphosphate = RNA(n+1) + diphosphate. In terms of biological role, DNA-dependent RNA polymerase catalyzes the transcription of DNA into RNA using the four ribonucleoside triphosphates as substrates. This chain is DNA-directed RNA polymerase subunit alpha, found in Malacoplasma penetrans (strain HF-2) (Mycoplasma penetrans).